Here is a 260-residue protein sequence, read N- to C-terminus: Indole-3-glycerol phosphate synthase (260 aa).

This sequence belongs to the TrpC family.

The catalysed reaction is 1-(2-carboxyphenylamino)-1-deoxy-D-ribulose 5-phosphate + H(+) = (1S,2R)-1-C-(indol-3-yl)glycerol 3-phosphate + CO2 + H2O. The protein operates within amino-acid biosynthesis; L-tryptophan biosynthesis; L-tryptophan from chorismate: step 4/5. The protein is Indole-3-glycerol phosphate synthase of Staphylococcus aureus (strain COL).